Reading from the N-terminus, the 248-residue chain is NAD(P)H-quinone oxidoreductase subunit K (248 aa).

Residues cysteine 66, cysteine 67, cysteine 131, and cysteine 162 each contribute to the [4Fe-4S] cluster site.

Belongs to the complex I 20 kDa subunit family. As to quaternary structure, NDH-1 can be composed of about 15 different subunits; different subcomplexes with different compositions have been identified which probably have different functions. It depends on [4Fe-4S] cluster as a cofactor.

The protein localises to the cellular thylakoid membrane. The enzyme catalyses a plastoquinone + NADH + (n+1) H(+)(in) = a plastoquinol + NAD(+) + n H(+)(out). The catalysed reaction is a plastoquinone + NADPH + (n+1) H(+)(in) = a plastoquinol + NADP(+) + n H(+)(out). Its function is as follows. NDH-1 shuttles electrons from an unknown electron donor, via FMN and iron-sulfur (Fe-S) centers, to quinones in the respiratory and/or the photosynthetic chain. The immediate electron acceptor for the enzyme in this species is believed to be plastoquinone. Couples the redox reaction to proton translocation, and thus conserves the redox energy in a proton gradient. Cyanobacterial NDH-1 also plays a role in inorganic carbon-concentration. This Synechococcus sp. (strain WH7803) protein is NAD(P)H-quinone oxidoreductase subunit K.